The chain runs to 117 residues: Photosystem II reaction center Psb28 protein (117 aa).

It belongs to the Psb28 family. Part of the photosystem II complex.

Its subcellular location is the cellular thylakoid membrane. The chain is Photosystem II reaction center Psb28 protein from Prochlorococcus marinus (strain MIT 9312).